We begin with the raw amino-acid sequence, 452 residues long: MRRALDDRRRGPHGPEGKPPMRVLLTCIAHNTHYYNLVPVAWALRAAGHEVRVAAQPALTDTITASGLTAVPVGGNESVLEFVTEIGGDPGPYQRGMDFAETCGEPLSYEHALGQQTAMSALCFAPFNCDSTIDDMVALARSWRPDLVLWEPFTYAGPIAAHACGAAHARLLWGPDVILNARAQFRRLAAGQPEERREDPVAEWLGWTLERHGLTAERETVEELIGGQWTLDPTAESLRLPAAGRVVPFRFVPYNGRSVLPDWLLRKPGRPRVCFTLGVSARETYGRDAVPFHELLAGLGDLDAEIVATLDPGQLSGAGEVPRNVRAVDFVPMDALLPTCSAVVHHGGAGTCFTATLNGLPQIVVAALWDAPLKGAQLAEAGAGVSIAPEKLDAATLRAGVVRALEDEDMRRSAGLLRAEMLAEPTPAGLVPQLERLTALHRNGRSRSAPER.

Positions 1–16 (MRRALDDRRRGPHGPE) are enriched in basic and acidic residues. The interval 1-20 (MRRALDDRRRGPHGPEGKPP) is disordered.

It belongs to the glycosyltransferase 28 family.

The catalysed reaction is tylactone + dTDP-alpha-D-mycaminose = 5-O-beta-D-mycaminosyltylactone + dTDP + H(+). Its pathway is antibiotic biosynthesis; tylosin biosynthesis. With respect to regulation, the activity of TylM2 is substantially increased by the addition of the accessory protein TylM3. In terms of biological role, involved in the biosynthesis of the macrolide antibiotic tylosin derived from the polyketide lactone tylactone. Catalyzes the transfer of alpha-D-mycaminosyl from dTDP-alpha-D-mycaminose to the 5-hydroxyl group of tylactone to yield 5-O-mycaminosytylactone. It can also accept 16-membered tylactone and 12-membered ring macrolide. The polypeptide is Tylactone mycaminosyltransferase (Streptomyces fradiae (Streptomyces roseoflavus)).